The chain runs to 184 residues: Protein GrpE (184 aa).

The segment covering 1–26 has biased composition (polar residues); the sequence is MANEQNEQAQDIQNEQVEQSNEQTQA. The disordered stretch occupies residues 1 to 34; that stretch reads MANEQNEQAQDIQNEQVEQSNEQTQAEGVEQAND.

Belongs to the GrpE family. Homodimer.

It localises to the cytoplasm. In terms of biological role, participates actively in the response to hyperosmotic and heat shock by preventing the aggregation of stress-denatured proteins, in association with DnaK and GrpE. It is the nucleotide exchange factor for DnaK and may function as a thermosensor. Unfolded proteins bind initially to DnaJ; upon interaction with the DnaJ-bound protein, DnaK hydrolyzes its bound ATP, resulting in the formation of a stable complex. GrpE releases ADP from DnaK; ATP binding to DnaK triggers the release of the substrate protein, thus completing the reaction cycle. Several rounds of ATP-dependent interactions between DnaJ, DnaK and GrpE are required for fully efficient folding. The polypeptide is Protein GrpE (Acinetobacter baumannii (strain AB307-0294)).